The sequence spans 508 residues: Galactose-1-phosphate uridylyltransferase (508 aa).

This sequence belongs to the galactose-1-phosphate uridylyltransferase type 2 family.

It localises to the cytoplasm. It carries out the reaction alpha-D-galactose 1-phosphate + UDP-alpha-D-glucose = alpha-D-glucose 1-phosphate + UDP-alpha-D-galactose. The protein operates within carbohydrate metabolism; galactose metabolism. This chain is Galactose-1-phosphate uridylyltransferase (galT), found in Halalkalibacterium halodurans (strain ATCC BAA-125 / DSM 18197 / FERM 7344 / JCM 9153 / C-125) (Bacillus halodurans).